Reading from the N-terminus, the 105-residue chain is UPF0145 protein LPC_0273 (105 aa).

Belongs to the UPF0145 family.

In Legionella pneumophila (strain Corby), this protein is UPF0145 protein LPC_0273.